A 171-amino-acid chain; its full sequence is Probable DNA-directed RNA polymerase subunit delta (171 aa).

In terms of domain architecture, HTH HARE-type spans 14-81 (MALVEIAYEI…SDQTWGLRSW (68 aa)). The disordered stretch occupies residues 138-171 (EFDEIDEADDDELDDLEDEILDDDEDFDEEEDEE).

The protein belongs to the RpoE family. RNAP is composed of a core of 2 alpha, a beta and a beta' subunits. The core is associated with a delta subunit and one of several sigma factors.

Its function is as follows. Participates in both the initiation and recycling phases of transcription. In the presence of the delta subunit, RNAP displays an increased specificity of transcription, a decreased affinity for nucleic acids, and an increased efficiency of RNA synthesis because of enhanced recycling. The polypeptide is Probable DNA-directed RNA polymerase subunit delta (Bacillus licheniformis (strain ATCC 14580 / DSM 13 / JCM 2505 / CCUG 7422 / NBRC 12200 / NCIMB 9375 / NCTC 10341 / NRRL NRS-1264 / Gibson 46)).